A 600-amino-acid chain; its full sequence is 69 kDa paraflagellar rod protein (600 aa).

The interval 335-355 (DKQDEAWRRIQELERVLQRLG) is calmodulin-binding.

Heterodimer of a 69 kDa and a 73 kDa protein.

It is found in the cell projection. Its subcellular location is the cilium. The protein localises to the flagellum. It localises to the cytoplasm. The protein resides in the cytoskeleton. Its function is as follows. Major component of the paraflagellar rod (PFR). The PFR is a highly ordered lattices of fibrous proteins that are located inside the flagellum and assume a fixed orientation with respect to the microtubular axoneme. The sequence is that of 69 kDa paraflagellar rod protein (PFRA) from Trypanosoma brucei brucei.